Reading from the N-terminus, the 89-residue chain is Small ribosomal subunit protein uS15 (89 aa).

Belongs to the universal ribosomal protein uS15 family. Part of the 30S ribosomal subunit. Forms a bridge to the 50S subunit in the 70S ribosome, contacting the 23S rRNA.

In terms of biological role, one of the primary rRNA binding proteins, it binds directly to 16S rRNA where it helps nucleate assembly of the platform of the 30S subunit by binding and bridging several RNA helices of the 16S rRNA. Its function is as follows. Forms an intersubunit bridge (bridge B4) with the 23S rRNA of the 50S subunit in the ribosome. In Cupriavidus pinatubonensis (strain JMP 134 / LMG 1197) (Cupriavidus necator (strain JMP 134)), this protein is Small ribosomal subunit protein uS15.